The primary structure comprises 45 residues: Myotoxin-2 (45 aa).

3 disulfide bridges follow: cysteine 4-cysteine 36, cysteine 11-cysteine 30, and cysteine 18-cysteine 37.

It belongs to the crotamine-myotoxin family. In terms of assembly, monomer. As to expression, expressed by the venom gland.

The protein localises to the secreted. Cationic peptide that possesses multiple functions. It acts as a cell-penetrating peptide (CPP), and as a potent voltage-gated potassium channel (Kv) inhibitor. It exhibits antimicrobial activities, hind limb paralysis, and severe muscle necrosis by a non-enzymatic mechanism. The sequence is that of Myotoxin-2 from Crotalus viridis viridis (Prairie rattlesnake).